The primary structure comprises 216 residues: DNA replication complex GINS protein PSF3 (216 aa).

Residues 1-16 (MSEAYFRVESGALGPE) form a not essential for folding and stability of GINS complex, but may regulate accessibility to the central complex pore region.

Belongs to the GINS3/PSF3 family. In terms of assembly, component of the GINS complex which is a heterotetramer of GINS1, GINS2, GINS3 and GINS4. Forms a stable subcomplex with GINS2. GINS complex interacts with DNA primase in vitro. Component of the CMG helicase complex, a hexameric ring of related MCM2-7 subunits stabilized by CDC45 and the tetrameric GINS complex.

It is found in the nucleus. It localises to the chromosome. Required for correct functioning of the GINS complex, a complex that plays an essential role in the initiation of DNA replication, and progression of DNA replication forks. GINS complex is a core component of CDC45-MCM-GINS (CMG) helicase, the molecular machine that unwinds template DNA during replication, and around which the replisome is built. The sequence is that of DNA replication complex GINS protein PSF3 (GINS3) from Bos taurus (Bovine).